A 338-amino-acid chain; its full sequence is Anthranilate phosphoribosyltransferase (338 aa).

5-phospho-alpha-D-ribose 1-diphosphate is bound by residues Gly-81, 84 to 85 (GD), Ser-89, 91 to 94 (NIST), 109 to 117 (KHGNRSVSS), and Ser-121. Gly-81 is an anthranilate binding site. Ser-93 is a binding site for Mg(2+). Asn-112 lines the anthranilate pocket. Anthranilate is bound at residue Arg-167. The Mg(2+) site is built by Asp-226 and Glu-227.

It belongs to the anthranilate phosphoribosyltransferase family. Homodimer. The cofactor is Mg(2+).

The enzyme catalyses N-(5-phospho-beta-D-ribosyl)anthranilate + diphosphate = 5-phospho-alpha-D-ribose 1-diphosphate + anthranilate. Its pathway is amino-acid biosynthesis; L-tryptophan biosynthesis; L-tryptophan from chorismate: step 2/5. Catalyzes the transfer of the phosphoribosyl group of 5-phosphorylribose-1-pyrophosphate (PRPP) to anthranilate to yield N-(5'-phosphoribosyl)-anthranilate (PRA). The chain is Anthranilate phosphoribosyltransferase from Thioalkalivibrio sulfidiphilus (strain HL-EbGR7).